A 741-amino-acid polypeptide reads, in one-letter code: Pentatricopeptide repeat-containing protein At3g58590 (741 aa).

20 PPR repeats span residues 48-78 (PVYV…MPER), 79-113 (NKVS…GYLP), 114-146 (NQST…GLFM), 148-178 (DAFV…MPFK), 179-213 (SLET…GASL), 214-248 (TESS…GLDC), 249-279 (EISV…AGSW), 280-314 (DIVS…GFSP), 315-349 (NQGT…GCET), 350-380 (GIVL…IRDK), 381-414 (NIVC…GFRP), 415-445 (TEYT…GYED), 446-481 (NDYV…SVVP), 483-508 (NIVA…LEQP), 509-543 (DTVS…NIRP), 544-578 (DKYT…DFSC), 580-610 (DTFV…TREK), 611-645 (NLIT…GFKP), 646-680 (DRVS…GVEP), and 681-715 (EMDH…ADAP).

It belongs to the PPR family. P subfamily.

This is Pentatricopeptide repeat-containing protein At3g58590 from Arabidopsis thaliana (Mouse-ear cress).